Here is a 689-residue protein sequence, read N- to C-terminus: Beta-galactosidase Pbg (689 aa).

Arg-118 is a substrate binding site. Cys-122 lines the Zn(2+) pocket. Asn-156 provides a ligand contact to substrate. The active-site Proton donor is Glu-157. Zn(2+) is bound by residues Cys-162, Cys-164, and Cys-167. Glu-318 serves as the catalytic Nucleophile. Substrate contacts are provided by residues Trp-326 and 366–369 (EKFH).

The protein belongs to the glycosyl hydrolase 42 family.

It carries out the reaction Hydrolysis of terminal non-reducing beta-D-galactose residues in beta-D-galactosides.. The sequence is that of Beta-galactosidase Pbg from Clostridium perfringens (strain ATCC 13124 / DSM 756 / JCM 1290 / NCIMB 6125 / NCTC 8237 / Type A).